The chain runs to 429 residues: tRNA(Ile2) 2-agmatinylcytidine synthetase TiaS (429 aa).

The segment at residues 271–343 (VRGKVIKKYW…LTLNLEKFYP (73 aa)) is a DNA-binding region (OB).

It belongs to the TiaS family.

The protein localises to the cytoplasm. The enzyme catalyses cytidine(34) in tRNA(Ile2) + agmatine + ATP + H2O = 2-agmatinylcytidine(34) in tRNA(Ile2) + AMP + 2 phosphate + 2 H(+). Functionally, ATP-dependent agmatine transferase that catalyzes the formation of 2-agmatinylcytidine (agm2C) at the wobble position (C34) of tRNA(Ile2), converting the codon specificity from AUG to AUA. This chain is tRNA(Ile2) 2-agmatinylcytidine synthetase TiaS, found in Thermococcus sibiricus (strain DSM 12597 / MM 739).